The following is a 295-amino-acid chain: Pyridoxal 5'-phosphate synthase subunit PdxS (295 aa).

D25 contributes to the D-ribose 5-phosphate binding site. K82 serves as the catalytic Schiff-base intermediate with D-ribose 5-phosphate. D-ribose 5-phosphate is bound at residue G154. R166 contributes to the D-glyceraldehyde 3-phosphate binding site. D-ribose 5-phosphate-binding positions include G215 and 236-237; that span reads GS.

This sequence belongs to the PdxS/SNZ family. In terms of assembly, in the presence of PdxT, forms a dodecamer of heterodimers.

The enzyme catalyses aldehydo-D-ribose 5-phosphate + D-glyceraldehyde 3-phosphate + L-glutamine = pyridoxal 5'-phosphate + L-glutamate + phosphate + 3 H2O + H(+). It participates in cofactor biosynthesis; pyridoxal 5'-phosphate biosynthesis. Functionally, catalyzes the formation of pyridoxal 5'-phosphate from ribose 5-phosphate (RBP), glyceraldehyde 3-phosphate (G3P) and ammonia. The ammonia is provided by the PdxT subunit. Can also use ribulose 5-phosphate and dihydroxyacetone phosphate as substrates, resulting from enzyme-catalyzed isomerization of RBP and G3P, respectively. This chain is Pyridoxal 5'-phosphate synthase subunit PdxS, found in Natranaerobius thermophilus (strain ATCC BAA-1301 / DSM 18059 / JW/NM-WN-LF).